A 434-amino-acid polypeptide reads, in one-letter code: MKLSHLAAALSAQLVAPVAAGYLRQDILTAGTLRDTTVPAAPNEDLNQIVSDSQLLSLHRTICEIESVSNHESTVGEALIKYLGEHDFTTEKQIVPVDEDDDSTDERYNVWAYPKGSPKPKIILTSHIDTVPPHINYSLHAPEGDFDRANITIKGRGTVDAKASVAAMIIAALDHMKESPDVPVGLLFVVSEERGGTGMIHFSDSELNTSPPFFHTLIFGEPTELKLVDGHKGNLRFDVEAKGVSAHSGYPWLGHSAISEILPVLARIDGLGDIPVEDGGLPSSEKYGSTTLNIGTVRGGAAGNVVPESASASVAVRLADGTVEDAQDIIRKAVADASGGSKNITLKFPDDKAYPPIDLDTDVDGFELLTVNYGTDIPKLDIHDEDSDVKVKRYLYGPGTILVAHGVDEGLTVGDLEKAVEGYSKLIDAAVKRG.

Positions 1–20 (MKLSHLAAALSAQLVAPVAA) are cleaved as a signal peptide. Asn136 and Asn150 each carry an N-linked (GlcNAc...) asparagine glycan. Asp160 is a binding site for Zn(2+). Catalysis depends on Glu192, which acts as the Proton acceptor. Glu193 lines the Zn(2+) pocket. Asn343 is a glycosylation site (N-linked (GlcNAc...) asparagine).

It belongs to the peptidase M20A family. The cofactor is Zn(2+).

It localises to the secreted. This is Probable carboxypeptidase BDCG_03757 from Ajellomyces dermatitidis (strain ER-3 / ATCC MYA-2586) (Blastomyces dermatitidis).